A 454-amino-acid chain; its full sequence is Histidine--tRNA ligase (454 aa).

The protein belongs to the class-II aminoacyl-tRNA synthetase family. Homodimer.

The protein localises to the cytoplasm. It catalyses the reaction tRNA(His) + L-histidine + ATP = L-histidyl-tRNA(His) + AMP + diphosphate + H(+). The polypeptide is Histidine--tRNA ligase (Bacteroides fragilis (strain YCH46)).